A 174-amino-acid polypeptide reads, in one-letter code: MKFLVSLVIFSLFLNGFATAQTLIQDSCKKAFAKDPQLSYDFCVNSLTQDPQSKAATTLESLVLASTKTAAAKITNLKGIVAQDLKDQRYQDIVEDLKLCLGFYNDANDDLTTALANIKSRDYQGANINLSAALDVPGNCEDDFKEAKKTSPITNENSILFKTILIPLAFTNML.

An N-terminal signal peptide occupies residues 1–20 (MKFLVSLVIFSLFLNGFATA). 2 disulfides stabilise this stretch: Cys-28-Cys-43 and Cys-100-Cys-140. Asn-129 carries N-linked (GlcNAc...) asparagine glycosylation.

This sequence belongs to the PMEI family.

It is found in the secreted. It localises to the extracellular space. The protein resides in the apoplast. Pectin methylesterase (PME) inhibitor involved in the maintenance of cell wall integrity in response to necrotrophic pathogens. Modulates PME activity and pectin methylesterification during infection by Botrytis cinerea and contributes to resistance against the pathogen. The polypeptide is Pectinesterase inhibitor 12 (Arabidopsis thaliana (Mouse-ear cress)).